A 638-amino-acid polypeptide reads, in one-letter code: Zinc finger protein 143 (638 aa).

Residue methionine 1 is modified to N-acetylmethionine. Lysine 213 is covalently cross-linked (Glycyl lysine isopeptide (Lys-Gly) (interchain with G-Cter in SUMO2)). 4 consecutive C2H2-type zinc fingers follow at residues 237 to 261, 267 to 291, 297 to 321, and 327 to 351; these read FRCK…ERSH, YQCE…FRTH, YRCS…IRTH, and FKCP…IRTH. Threonine 352 is modified (phosphothreonine). 3 C2H2-type zinc fingers span residues 357-381, 387-411, and 417-440; these read YYCT…VRIH, YVCT…HVVH, and YNCN…RTAH. Lysine 406 participates in a covalent cross-link: Glycyl lysine isopeptide (Lys-Gly) (interchain with G-Cter in SUMO2).

Belongs to the GLI C2H2-type zinc-finger protein family. In terms of assembly, interacts with CHD8. Forms a complex with HCFC1 and ZNF143.

The protein localises to the nucleus. Functionally, transcriptional activator. In complex with HCFC1 and ZNF143, regulates the expression of several genes, including AP2S1, ESCO2, OPHN1, RBL1, UBXN8 and ZNF32. Activates the gene for selenocysteine tRNA (tRNAsec). Binds to the SPH motif of small nuclear RNA (snRNA) gene promoters. Participates in efficient U6 RNA polymerase III transcription via its interaction with CHD8. This Rattus norvegicus (Rat) protein is Zinc finger protein 143 (Znf143).